We begin with the raw amino-acid sequence, 49 residues long: Disintegrin ocellatin (49 aa).

The 47-residue stretch at 1 to 47 (DCESGPCCDNCKFLKEGTICKMARGDNMHHYCNGKTCDCPRNPYKGE) folds into the Disintegrin domain. 4 disulfides stabilise this stretch: Cys2-Cys11, Cys7-Cys32, Cys8-Cys37, and Cys20-Cys39. The Cell attachment site signature appears at 24–26 (RGD).

It belongs to the venom metalloproteinase (M12B) family. P-II subfamily. P-IIa sub-subfamily. As to quaternary structure, monomer. In terms of tissue distribution, expressed by the venom gland.

It localises to the secreted. Functionally, inhibits ADP-induced human platelet aggregation. In Echis ocellatus (Ocellated saw-scaled viper), this protein is Disintegrin ocellatin.